The following is a 451-amino-acid chain: MFKTLYSRIAIYAITVILFSALMSFLFTNIYYHFHLKASNDAKIMRTLKEAREYERTQKPKPLDTYLKHLGQMNYQIMTVNEHGTKHFYGETFRKNTISQSAIKKVLNGEDYHGIKNKPYAFFVTGFFDNETDNTVGIQFKTDDGALAVFMRPDIGKTFSEFRIFLAVLITLLLIISISLVIASTYSIIKPVTALKNATTRIMKGDFSTPIKQTRHDEIGTLQSRFNTMRQNLGQVDQMRQHFVQNVSHEIKTPLTHLQRLLTQLELTQNEEEKQLCINEMFEITNQVSELTKELLLLSELDNASHLTFNDNVHLNTLIKDIIRHEQFRTDEKDLVLFTELEDLYFRGNERLLHQAFNNLIINAMKYAPQNSMINITLTSTNHLIIFNIENDGSIAEEDAKHIFDRFYKLSDESSSNGLGLAITQSIIHLHHGSITLTSDDKTQFIVKLFI.

2 consecutive transmembrane segments (helical) span residues 9–29 (IAIY…LFTN) and 164–184 (IFLA…VIAS). Residues 186–238 (YSIIKPVTALKNATTRIMKGDFSTPIKQTRHDEIGTLQSRFNTMRQNLGQVDQ) enclose the HAMP domain. The Histidine kinase domain maps to 246–451 (NVSHEIKTPL…KTQFIVKLFI (206 aa)). H249 is modified (phosphohistidine; by autocatalysis).

Post-translationally, autophosphorylated.

It is found in the cell membrane. The enzyme catalyses ATP + protein L-histidine = ADP + protein N-phospho-L-histidine.. Its function is as follows. Member of the two-component regulatory system HssS/HssR involved in intracellular heme homeostasis and tempering of staphylococcal virulence. HssS functions as a heme sensor histidine kinase which is autophosphorylated at a histidine residue and transfers its phosphate group to an aspartate residue of HssR. HssR/HssS activates the expression of HrtAB, an efflux pump, in response to extracellular heme, hemin, hemoglobin or blood. The chain is Heme sensor protein HssS (hssS) from Staphylococcus epidermidis (strain ATCC 12228 / FDA PCI 1200).